Reading from the N-terminus, the 363-residue chain is Phosphoribosylformylglycinamidine cyclo-ligase (363 aa).

Belongs to the AIR synthase family.

It localises to the cytoplasm. The enzyme catalyses 2-formamido-N(1)-(5-O-phospho-beta-D-ribosyl)acetamidine + ATP = 5-amino-1-(5-phospho-beta-D-ribosyl)imidazole + ADP + phosphate + H(+). It functions in the pathway purine metabolism; IMP biosynthesis via de novo pathway; 5-amino-1-(5-phospho-D-ribosyl)imidazole from N(2)-formyl-N(1)-(5-phospho-D-ribosyl)glycinamide: step 2/2. This is Phosphoribosylformylglycinamidine cyclo-ligase from Parvibaculum lavamentivorans (strain DS-1 / DSM 13023 / NCIMB 13966).